A 428-amino-acid polypeptide reads, in one-letter code: Dihydroorotase (428 aa).

Positions 59 and 61 each coordinate Zn(2+). Residues 61-63 and asparagine 93 each bind substrate; that span reads HLR. Residues aspartate 151, histidine 178, and histidine 231 each contribute to the Zn(2+) site. Asparagine 277 contacts substrate. Residue aspartate 304 coordinates Zn(2+). Residue aspartate 304 is part of the active site. Substrate is bound by residues histidine 308 and 322-323; that span reads FG.

Belongs to the metallo-dependent hydrolases superfamily. DHOase family. Class I DHOase subfamily. Zn(2+) is required as a cofactor.

It catalyses the reaction (S)-dihydroorotate + H2O = N-carbamoyl-L-aspartate + H(+). It participates in pyrimidine metabolism; UMP biosynthesis via de novo pathway; (S)-dihydroorotate from bicarbonate: step 3/3. Its function is as follows. Catalyzes the reversible cyclization of carbamoyl aspartate to dihydroorotate. In Bacillus cereus (strain ATCC 14579 / DSM 31 / CCUG 7414 / JCM 2152 / NBRC 15305 / NCIMB 9373 / NCTC 2599 / NRRL B-3711), this protein is Dihydroorotase.